A 152-amino-acid chain; its full sequence is Methylglyoxal synthase (152 aa).

The MGS-like domain occupies 5–152 (TRTVQAQKHI…YQLYLQQRLK (148 aa)). Substrate is bound by residues His-19, Lys-23, 45-48 (TGTT), and 65-66 (SG). Asp-71 (proton donor/acceptor) is an active-site residue. His-98 contacts substrate.

This sequence belongs to the methylglyoxal synthase family.

It carries out the reaction dihydroxyacetone phosphate = methylglyoxal + phosphate. Functionally, catalyzes the formation of methylglyoxal from dihydroxyacetone phosphate. This is Methylglyoxal synthase from Erwinia tasmaniensis (strain DSM 17950 / CFBP 7177 / CIP 109463 / NCPPB 4357 / Et1/99).